The chain runs to 744 residues: MNILINKRIFLLVTLVGIQLNVTAKQNSSNSNREELLPIIVNTNDDSNKLPGRSVLKQKNIEQXQADNAANLINILPGVNMAGGFRPGGQTLNINGMGDAEDVRVQLDGATKSFEKYQQGSIFIEPELLRRVTVDKGNYSPQYGNGGFAGTVKFETKDARDFLQENQKIGGFLKYGNNSNNNQKTYSTALVLQNEQKNIDLLLFGSVRNAGDYKRPDNSKILFSKNNQKTGLIKLNWQISPEHLLTLSSVYGIHKGWEPFAAKRDILPKPSLSDIMRYGTDIAWKRKLVYRDQKDENYTLKYNYLPENNPWINLSTQFSYSKTTQNDMRPKEASSGLVGSLGNQSWITYSDLTFDINNTSTFNIKTTVHELLFGLQWLKNTRNTLMYDKSKVRKADYNYGYFQPYYMPSGRQYTQAFYLQDQIKWKNIIFSTGVRYDHINNIGQKNLALKYNDISAGHDYSQKNYNGWSYYLGLNYDVNHYLSLFTNFSKTWRAPVIDEQYETQFKQSSVPATSLNLEKEMINQTRVGGIITLNHLFQENDAFQFRTTYFYNRGKNEIFKTRGVNCVGNAADTNNKVCPKIIENYRNLPGYVIQGAELEAYYQSTYLFGEITYSYVKGKRDTSPRNPWGKTSTWIAEIPPRKATTALGFNVPKYYLTVGWRAEFVRRQDRSPLSGDPKASSWSLPASRGYSLHNLFLSWSPAKIKGMNVKITVDNLFNRAYNPYLGELASGTGRNIKFSLSQKF.

The first 24 residues, 1 to 24 (MNILINKRIFLLVTLVGIQLNVTA), serve as a signal peptide directing secretion. The region spanning 45 to 157 (DDSNKLPGRS…FAGTVKFETK (113 aa)) is the TBDR plug domain. The 577-residue stretch at 168–744 (KIGGFLKYGN…NIKFSLSQKF (577 aa)) folds into the TBDR beta-barrel domain.

Belongs to the TonB-dependent receptor family.

It localises to the cell outer membrane. Functionally, heme receptor. The protein is TonB-dependent heme receptor A (tdhA) of Haemophilus influenzae (strain ATCC 51907 / DSM 11121 / KW20 / Rd).